Reading from the N-terminus, the 775-residue chain is Subtilisin-like protease SBT4.1 (775 aa).

Positions M1–A23 are cleaved as a signal peptide. A glycan (N-linked (GlcNAc...) asparagine) is linked at N24. A propeptide spans N24 to Q106 (activation peptide). The region spanning T29–L105 is the Inhibitor I9 domain. In terms of domain architecture, Peptidase S8 spans S110–R606. Residues N115 and N126 are each glycosylated (N-linked (GlcNAc...) asparagine). D136 serves as the catalytic Charge relay system. N162 carries N-linked (GlcNAc...) asparagine glycosylation. Catalysis depends on H196, which acts as the Charge relay system. The PA domain maps to F365–L459. An N-linked (GlcNAc...) asparagine glycan is attached at N437. Catalysis depends on S551, which acts as the Charge relay system. An N-linked (GlcNAc...) asparagine glycan is attached at N601.

Belongs to the peptidase S8 family. In terms of processing, the C-terminal propeptide is autocleaved.

It localises to the secreted. The protein is Subtilisin-like protease SBT4.1 of Arabidopsis thaliana (Mouse-ear cress).